A 284-amino-acid chain; its full sequence is Phosphonates import ATP-binding protein PhnC 2 (284 aa).

The ABC transporter domain maps to 24–264 (IRIDGISVRR…LEARIFPSLA (241 aa)). ATP is bound at residue 56-63 (GPSGVGKT).

This sequence belongs to the ABC transporter superfamily. Phosphonates importer (TC 3.A.1.9.1) family. In terms of assembly, the complex is composed of two ATP-binding proteins (PhnC), two transmembrane proteins (PhnE) and a solute-binding protein (PhnD).

The protein localises to the cell inner membrane. The enzyme catalyses phosphonate(out) + ATP + H2O = phosphonate(in) + ADP + phosphate + H(+). Functionally, part of the ABC transporter complex PhnCDE involved in phosphonates import. Responsible for energy coupling to the transport system. The polypeptide is Phosphonates import ATP-binding protein PhnC 2 (Rhodopseudomonas palustris (strain ATCC BAA-98 / CGA009)).